The sequence spans 7031 residues: Extracellular matrix-binding protein EbhB (7031 aa).

The first 39 residues, 1–39 (MNYRDKIQKFSIRKYTVGTFSTVIATLVFLGFNTSQAHA), serve as a signal peptide directing secretion. Over residues 41 to 59 (ETNQPASVVKQKQQSNNEQ) the composition is skewed to polar residues. Disordered regions lie at residues 41 to 86 (ETNQ…HENE), 99 to 152 (KVAQ…GNDN), 250 to 277 (PQRQQTSRRSNRIQTRSVESRAAEPRSV), 1342 to 1373 (NNITGNEKSQAEAGGRPNFRTTGYSQSNATTD), and 2418 to 2438 (TITPKAGTGHSVSSNPSTLTA). Low complexity predominate over residues 65-80 (SQVQNSQNSQNGQSLS). Residues 99-117 (KVAQSSTTNDEQPASQNVN) are compositionally biased toward polar residues. Over residues 130–140 (PDKEQSKHKQN) the composition is skewed to basic and acidic residues. Polar residues-rich tracts occupy residues 141–151 (ESQSANKNGND), 250–266 (PQRQQTSRRSNRIQTRS), 1360–1373 (FRTTGYSQSNATTD), and 2427–2438 (HSVSSNPSTLTA). 38 FIVAR domains span residues 2524–2580 (AKNH…VSDA), 2610–2666 (SKNN…ISDE), 2687–2750 (DTHA…VQSA), 2780–2836 (AKTK…IAAE), 2864–2919 (AKTQ…IRQN), 2947–3002 (AKNQ…INTN), 3030–3085 (AKTQ…INDK), 3154–3212 (AMTK…VNQK), 3280–3339 (AMTG…VNNA), 3407–3465 (AMGN…VNRA), 3533–3591 (AMGN…VTEA), 3659–3717 (AMNT…ITQK), 3785–3843 (AMAS…VEAA), 3911–3969 (AMGN…VEQA), 4037–4095 (AMGT…VTAA), 4163–4221 (AMKG…ITQA), 4289–4347 (QMGN…VEAA), 4415–4473 (AMAN…VENA), 4541–4599 (AMGT…INQI), 4667–4725 (AMGQ…VDRA), 4793–4851 (AMNS…VDNA), 4919–4977 (AMGA…INGM), 5045–5103 (AMTA…VNSA), 5171–5229 (AMKG…ITQV), 5297–5355 (AMHS…VEQA), 5423–5481 (AMGQ…VERA), 5549–5607 (AMTA…VTNA), 5675–5733 (AMKG…INQA), 5801–5859 (AMTN…VETA), 5927–5985 (AMSN…VEQA), 6053–6111 (AMNQ…INQK), 6179–6236 (AMGN…VQAA), 6304–6362 (AMGQ…VEAA), 6430–6488 (AMQR…VEQA), 6556–6614 (AMDQ…VTAA), 6682–6740 (AMNQ…VTQA), 6818–6866 (DKDQ…VEAA), and 6934–6992 (AMGN…VEAA).

The chain is Extracellular matrix-binding protein EbhB (ebhB) from Staphylococcus aureus (strain Newman).